The primary structure comprises 559 residues: Leucine-rich repeat-containing protein 71 (559 aa).

Positions 1 to 18 (MSSEQSAPGASPRAPRPG) are enriched in low complexity. The tract at residues 1-56 (MSSEQSAPGASPRAPRPGTQKSSGAVTKKGERAAKEKPATVLPPVGEEEPKSPEEY) is disordered. Residues 28–38 (KKGERAAKEKP) are compositionally biased toward basic and acidic residues. LRR repeat units follow at residues 172 to 193 (NLWK…LPLC), 196 to 216 (TLRK…HKLM), 221 to 241 (TIAH…QLLG), 253 to 266 (TLVS…HIGD), and 281 to 302 (SLLW…KLAE). 2 stretches are compositionally biased toward basic and acidic residues: residues 324 to 348 (KGTQ…REKS) and 380 to 391 (KSWELAKKEEKL). A disordered region spans residues 324–427 (KGTQERSRSP…PEQKPSRAKG (104 aa)).

The sequence is that of Leucine-rich repeat-containing protein 71 (LRRC71) from Homo sapiens (Human).